The sequence spans 133 residues: Snaclec purpureotin subunit alpha (133 aa).

3 disulfide bridges follow: cysteine 2–cysteine 13, cysteine 30–cysteine 127, and cysteine 102–cysteine 119. The 120-residue stretch at 9–128 (FKQYCYQIIK…CEQKHIFMCK (120 aa)) folds into the C-type lectin domain.

The protein belongs to the snaclec family. Homodimer (non-covalently linked) of heterodimer of alpha and beta subunits (disulfide-linked). In terms of tissue distribution, expressed by the venom gland.

Its subcellular location is the secreted. In terms of biological role, snaclec that induces platelet aggregation without any cofactor in a dose-dependent manner. Its platelet aggregation effect is blocked by echicetin, suggesting it is a GPIb-binding protein which binds to the same or a closely related GPIb site on platelets as echicetin. This is Snaclec purpureotin subunit alpha from Trimeresurus purpureomaculatus (Mangrove pit viper).